The sequence spans 293 residues: Elongation factor Ts (293 aa).

Residues 79–82 (TDFV) are involved in Mg(2+) ion dislocation from EF-Tu.

The protein belongs to the EF-Ts family.

It is found in the cytoplasm. In terms of biological role, associates with the EF-Tu.GDP complex and induces the exchange of GDP to GTP. It remains bound to the aminoacyl-tRNA.EF-Tu.GTP complex up to the GTP hydrolysis stage on the ribosome. This Bacillus pumilus (strain SAFR-032) protein is Elongation factor Ts.